Consider the following 732-residue polypeptide: Beta-galactosidase 5 (732 aa).

An N-terminal signal peptide occupies residues 1 to 23 (MGTTILVLSKILTFLLTTMLIGS). Residue Glu187 is the Proton donor of the active site. The active-site Nucleophile is the Glu256. Residue Asn466 is glycosylated (N-linked (GlcNAc...) asparagine).

This sequence belongs to the glycosyl hydrolase 35 family. In terms of tissue distribution, expressed in leaves and flowers.

The protein localises to the secreted. The protein resides in the extracellular space. Its subcellular location is the apoplast. The catalysed reaction is Hydrolysis of terminal non-reducing beta-D-galactose residues in beta-D-galactosides.. This Arabidopsis thaliana (Mouse-ear cress) protein is Beta-galactosidase 5 (BGAL5).